A 214-amino-acid polypeptide reads, in one-letter code: MSTLHKVKAYFGMAPMDDYEDEYYEDDDRGARAGGYSRRPREDRFEEEAYGYEGHEYDEGPAYRGGYAERFADEPRFEGRMRAPREFDRPAPARLGAMRGSTRGALAMDPRGMAELFEAGSPLAKITTLRPKDYSEARTIGERFRDGTPVIMDLVSMDNADAKRLVDFAAGLAFALRGSFDKVATKVFLLSPADVDVTAEERRRIAEAGFYSYR.

The tract at residues 25-51 (EDDDRGARAGGYSRRPREDRFEEEAYG) is disordered.

The protein belongs to the SepF family. In terms of assembly, homodimer. Interacts with FtsZ.

It is found in the cytoplasm. Functionally, cell division protein that is part of the divisome complex and is recruited early to the Z-ring. Probably stimulates Z-ring formation, perhaps through the cross-linking of FtsZ protofilaments. Its function overlaps with FtsA. This is Cell division protein SepF from Mycolicibacterium smegmatis (strain ATCC 700084 / mc(2)155) (Mycobacterium smegmatis).